A 381-amino-acid polypeptide reads, in one-letter code: Creatine kinase B-type (381 aa).

The 88-residue stretch at 11-98 (KMKYSVDDEY…FDPVIEDRHG (88 aa)) folds into the Phosphagen kinase N-terminal domain. Val-72 contacts creatine. Residues 125 to 367 (YVLSSRVRTG…KLLIEMEKRL (243 aa)) enclose the Phosphagen kinase C-terminal domain. ATP contacts are provided by residues 128 to 132 (SSRVR), Arg-130, Arg-132, and His-191. Glu-232 is a creatine binding site. Arg-236 is a binding site for ATP. Phosphothreonine; by autocatalysis is present on Thr-282. Residue Ser-285 participates in creatine binding. Position 285 is a phosphoserine; by autocatalysis (Ser-285). A Phosphothreonine; by autocatalysis modification is found at Thr-289. Residues Arg-292, Arg-320, 320–325 (RGTGGV), and Asp-335 each bind ATP.

Belongs to the ATP:guanido phosphotransferase family. Dimer of identical or non-identical chains, which can be either B (brain type) or M (muscle type). With MM being the major form in skeletal muscle and myocardium, MB existing in myocardium, and BB existing in many tissues, especially brain. Post-translationally, ba-CK and Bb-CK are phosphorylated. In terms of processing, the N-terminus of BA-CK is blocked. In terms of tissue distribution, expressed in almost all tissues and found enriched in various region of the brain, retina, heart, gizzard, gut and sperm.

It is found in the cytoplasm. The protein resides in the cytosol. The protein localises to the mitochondrion. It localises to the cell membrane. It catalyses the reaction creatine + ATP = N-phosphocreatine + ADP + H(+). In terms of biological role, reversibly catalyzes the transfer of phosphate between ATP and various phosphogens (e.g. creatine phosphate). Creatine kinase isoenzymes play a central role in energy transduction in tissues with large, fluctuating energy demands, such as skeletal muscle, heart, brain and spermatozoa. This chain is Creatine kinase B-type, found in Gallus gallus (Chicken).